A 77-amino-acid polypeptide reads, in one-letter code: Acyl carrier protein homolog (77 aa).

One can recognise a Carrier domain in the interval 1–76 (MSINIKDLIM…DLINAFEDVL (76 aa)). Serine 36 carries the post-translational modification O-(pantetheine 4'-phosphoryl)serine.

In terms of processing, 4'-phosphopantetheine is transferred from CoA to a specific serine of the apo-ACP-like protein.

It participates in lipid metabolism; fatty acid biosynthesis. In terms of biological role, carrier of the growing fatty acid chain in fatty acid biosynthesis. This is Acyl carrier protein homolog from Ureaplasma parvum serovar 3 (strain ATCC 700970).